The primary structure comprises 320 residues: Lipoyl synthase (320 aa).

The disordered stretch occupies residues 1–26 (MVTVVDRVTSRRLRHPEKMHRPDTSI). [4Fe-4S] cluster-binding residues include Cys59, Cys64, Cys70, Cys85, Cys89, Cys92, and Ser298. Residues 71 to 287 (WSQRHASFMI…AKIGKVKGFL (217 aa)) enclose the Radical SAM core domain.

It belongs to the radical SAM superfamily. Lipoyl synthase family. [4Fe-4S] cluster serves as cofactor.

It is found in the cytoplasm. It catalyses the reaction [[Fe-S] cluster scaffold protein carrying a second [4Fe-4S](2+) cluster] + N(6)-octanoyl-L-lysyl-[protein] + 2 oxidized [2Fe-2S]-[ferredoxin] + 2 S-adenosyl-L-methionine + 4 H(+) = [[Fe-S] cluster scaffold protein] + N(6)-[(R)-dihydrolipoyl]-L-lysyl-[protein] + 4 Fe(3+) + 2 hydrogen sulfide + 2 5'-deoxyadenosine + 2 L-methionine + 2 reduced [2Fe-2S]-[ferredoxin]. Its pathway is protein modification; protein lipoylation via endogenous pathway; protein N(6)-(lipoyl)lysine from octanoyl-[acyl-carrier-protein]: step 2/2. Catalyzes the radical-mediated insertion of two sulfur atoms into the C-6 and C-8 positions of the octanoyl moiety bound to the lipoyl domains of lipoate-dependent enzymes, thereby converting the octanoylated domains into lipoylated derivatives. This is Lipoyl synthase from Bartonella quintana (strain Toulouse) (Rochalimaea quintana).